We begin with the raw amino-acid sequence, 1060 residues long: Carbamoyl phosphate synthase large chain (1060 aa).

Residues 1 to 401 are carboxyphosphate synthetic domain; sequence MPKRTDIRKI…SLLKACRSLE (401 aa). ATP-binding residues include R129, R169, G175, G176, R208, I210, E215, G241, I242, H243, Q284, and E298. The ATP-grasp 1 domain maps to 133 to 327; that stretch reads KQLMEELNQP…IAKLAAKIAV (195 aa). Mg(2+) contacts are provided by Q284, E298, and N300. Residues Q284, E298, and N300 each coordinate Mn(2+). Residues 402–546 are oligomerization domain; the sequence is IGVDHIKIAD…YSTYAVENES (145 aa). A carbamoyl phosphate synthetic domain region spans residues 547-929; sequence LISDKASILV…ALYKAFEAAY (383 aa). The 191-residue stretch at 671 to 861 folds into the ATP-grasp 2 domain; sequence EATLQALNIP…MAQVATKVIL (191 aa). 10 residues coordinate ATP: R707, A746, L748, E752, G777, V778, H779, S780, Q820, and E832. Residues Q820, E832, and N834 each coordinate Mg(2+). Residues Q820, E832, and N834 each contribute to the Mn(2+) site. The 131-residue stretch at 930 to 1060 folds into the MGS-like domain; sequence LHMPDYGNIV…SRAFTLKVLD (131 aa). The tract at residues 930 to 1060 is allosteric domain; it reads LHMPDYGNIV…SRAFTLKVLD (131 aa).

It belongs to the CarB family. In terms of assembly, composed of two chains; the small (or glutamine) chain promotes the hydrolysis of glutamine to ammonia, which is used by the large (or ammonia) chain to synthesize carbamoyl phosphate. Tetramer of heterodimers (alpha,beta)4. Mg(2+) serves as cofactor. It depends on Mn(2+) as a cofactor.

It catalyses the reaction hydrogencarbonate + L-glutamine + 2 ATP + H2O = carbamoyl phosphate + L-glutamate + 2 ADP + phosphate + 2 H(+). The enzyme catalyses hydrogencarbonate + NH4(+) + 2 ATP = carbamoyl phosphate + 2 ADP + phosphate + 2 H(+). Its pathway is amino-acid biosynthesis; L-arginine biosynthesis; carbamoyl phosphate from bicarbonate: step 1/1. It participates in pyrimidine metabolism; UMP biosynthesis via de novo pathway; (S)-dihydroorotate from bicarbonate: step 1/3. Functionally, large subunit of the glutamine-dependent carbamoyl phosphate synthetase (CPSase). CPSase catalyzes the formation of carbamoyl phosphate from the ammonia moiety of glutamine, carbonate, and phosphate donated by ATP, constituting the first step of 2 biosynthetic pathways, one leading to arginine and/or urea and the other to pyrimidine nucleotides. The large subunit (synthetase) binds the substrates ammonia (free or transferred from glutamine from the small subunit), hydrogencarbonate and ATP and carries out an ATP-coupled ligase reaction, activating hydrogencarbonate by forming carboxy phosphate which reacts with ammonia to form carbamoyl phosphate. This is Carbamoyl phosphate synthase large chain from Streptococcus agalactiae serotype III (strain NEM316).